The following is a 239-amino-acid chain: uncharacterized protein (239 aa).

The interval 129 to 155 (DSLDDEDDNMISSNDPTKSPEEHDTTT) is disordered. S160 is subject to Phosphoserine.

This is an uncharacterized protein from Schizosaccharomyces pombe (strain 972 / ATCC 24843) (Fission yeast).